The primary structure comprises 88 residues: Cell division topological specificity factor (88 aa).

Belongs to the MinE family.

Its function is as follows. Prevents the cell division inhibition by proteins MinC and MinD at internal division sites while permitting inhibition at polar sites. This ensures cell division at the proper site by restricting the formation of a division septum at the midpoint of the long axis of the cell. The polypeptide is Cell division topological specificity factor (Carboxydothermus hydrogenoformans (strain ATCC BAA-161 / DSM 6008 / Z-2901)).